Consider the following 479-residue polypeptide: Ribulose bisphosphate carboxylase large chain (479 aa).

Positions 1 to 2 (MS) are excised as a propeptide. Residues N123 and T173 each contribute to the substrate site. K175 functions as the Proton acceptor in the catalytic mechanism. Position 177 (K177) interacts with substrate. Mg(2+)-binding residues include K201, D203, and E204. K201 bears the N6-carboxylysine mark. Residue S208 is modified to Phosphoserine. H294 (proton acceptor) is an active-site residue. Residues R295 and H327 each coordinate substrate. Phosphothreonine is present on T330. S379 contributes to the substrate binding site.

Belongs to the RuBisCO large chain family. Type I subfamily. As to quaternary structure, heterohexadecamer of 8 large chains and 8 small chains; disulfide-linked. The disulfide link is formed within the large subunit homodimers. The cofactor is Mg(2+). The disulfide bond which can form in the large chain dimeric partners within the hexadecamer appears to be associated with oxidative stress and protein turnover.

It localises to the plastid. The protein resides in the chloroplast. It catalyses the reaction 2 (2R)-3-phosphoglycerate + 2 H(+) = D-ribulose 1,5-bisphosphate + CO2 + H2O. The catalysed reaction is D-ribulose 1,5-bisphosphate + O2 = 2-phosphoglycolate + (2R)-3-phosphoglycerate + 2 H(+). Functionally, ruBisCO catalyzes two reactions: the carboxylation of D-ribulose 1,5-bisphosphate, the primary event in carbon dioxide fixation, as well as the oxidative fragmentation of the pentose substrate in the photorespiration process. Both reactions occur simultaneously and in competition at the same active site. The polypeptide is Ribulose bisphosphate carboxylase large chain (Capsella bursa-pastoris (Shepherd's purse)).